The following is a 460-amino-acid chain: 3'3'-cGAMP-specific phosphodiesterase 3 (460 aa).

Residues 28–189 (PPEHCIRCCW…IPLFSRIALL (162 aa)) form the HD domain. An HD-GYP domain is found at 260-455 (DDAYLECIVT…LPDEYTQLPH (196 aa)). The a divalent metal cation site is built by His-317 and Asp-318. Lys-321 (proton donor) is an active-site residue. 4 residues coordinate a divalent metal cation: His-346, His-370, His-371, and Asp-399.

Monomer. Mn(2+) is required as a cofactor.

It catalyses the reaction 3',3'-cGAMP + H2O = 5'-pApG-3' + H(+). Its function is as follows. Phosphodiesterase (PDE) that catalyzes the hydrolysis of 3'3'-cyclic GMP-AMP (3'3'-cGAMP), leading to linear 5'-pApG. Counteracts the function of the 3'3'-cGAMP synthase DncV, and is involved in the modulation of intracellular 3'3'-cGAMP levels. Enhances bacterial chemotaxis and inhibits intestinal colonization in vivo. Thus exerts a crucial role in regulating bacterial infectivity through catalyzing 3'3'-cGAMP degradation. Is specific for 3'3'-cGAMP since it cannot degrade other cGAMP linkage isomers (3'2'-, 2'3'-, and 2'2'-cGAMPs); is also able to hydrolyze c-di-GMP but not c-di-AMP. In Vibrio cholerae serotype O1 (strain ATCC 39315 / El Tor Inaba N16961), this protein is 3'3'-cGAMP-specific phosphodiesterase 3.